Here is a 458-residue protein sequence, read N- to C-terminus: Tol-Pal system protein TolB (458 aa).

Residues 1–23 (MSSVIRKWALTALMAVSSTALFA) form the signal peptide.

This sequence belongs to the TolB family. As to quaternary structure, the Tol-Pal system is composed of five core proteins: the inner membrane proteins TolA, TolQ and TolR, the periplasmic protein TolB and the outer membrane protein Pal. They form a network linking the inner and outer membranes and the peptidoglycan layer.

The protein localises to the periplasm. Functionally, part of the Tol-Pal system, which plays a role in outer membrane invagination during cell division and is important for maintaining outer membrane integrity. The polypeptide is Tol-Pal system protein TolB (Zymomonas mobilis subsp. mobilis (strain ATCC 31821 / ZM4 / CP4)).